The primary structure comprises 295 residues: Trimeric intracellular cation channel type A (295 aa).

Residues 1-18 are Lumenal-facing; sequence MELLSALSLDDLAASFSK. The chain crosses the membrane as a helical span at residues 19–39; that stretch reads LPVFPLFDVAYYIISILYLKY. Residues 40 to 51 are Cytoplasmic-facing; sequence EPGAVDLSKRSP. Residues 52-72 form a helical membrane-spanning segment; that stretch reads VASWLCAMLYCFGSYILADVL. Over 73-84 the chain is Lumenal; sequence LGESPIHYFSNN. A Ca(2+)-binding site is contributed by Gly-74. The helical transmembrane segment at 85-105 threads the bilayer; the sequence is ANILLASAVWYLTFFCPLNIF. The Cytoplasmic portion of the chain corresponds to 106 to 144; sequence YKIVSFLPVKLVLVGMKEVVRVRKIAMGIHHAHHHYHHG. The a 1,2-diacyl-sn-glycero-3-phospho-(1D-myo-inositol-4,5-bisphosphate) site is built by Lys-122 and Arg-126. A helical transmembrane segment spans residues 145–165; that stretch reads WVIMVLIGWVKGSGVALMSNL. The Lumenal segment spans residues 166–178; the sequence is EQLLRGVWKPETN. The helical transmembrane segment at 179 to 199 threads the bilayer; that stretch reads EILHMSFPTKASLYGAILFTL. At 200–201 the chain is on the cytoplasmic side; the sequence is QQ. Residues 202 to 222 traverse the membrane as a helical segment; the sequence is AHWLPISKAYLIFFFTLFMAV. Over 223 to 233 the chain is Lumenal; sequence CKIYMTATHSH. A helical transmembrane segment spans residues 234–254; it reads GSPFAIFESGICYVLFAAANG. Residues 255–295 are Cytoplasmic-facing; sequence DHDDHGNHHHHHDDHDVSHSAGKSKEEHNEGTRKRKTKKAE. Residues 258–295 form a disordered region; the sequence is DHGNHHHHHDDHDVSHSAGKSKEEHNEGTRKRKTKKAE. Over residues 267–286 the composition is skewed to basic and acidic residues; the sequence is DDHDVSHSAGKSKEEHNEGT.

The protein belongs to the TMEM38 family. As to quaternary structure, homotrimer; conformation seems to be controled by binding to diacylglycerol (DAG).

The protein localises to the sarcoplasmic reticulum membrane. It is found in the nucleus membrane. It carries out the reaction K(+)(in) = K(+)(out). Channel activity is activated by a change of voltage within the sarcoplasmic reticulum lumen and blocked by luminal high Ca(2+) levels. In terms of biological role, intracellular monovalent cation channel required for maintenance of rapid intracellular calcium release. Acts as a potassium counter-ion channel that functions in synchronization with calcium release from intracellular stores. Opened by a change of voltage within the sarcoplasmic reticulum lumen. The protein is Trimeric intracellular cation channel type A (tmem38a) of Xenopus laevis (African clawed frog).